The primary structure comprises 545 residues: Periplasmic trehalase (545 aa).

The signal sequence occupies residues 1-30; the sequence is MPDRTALPRAMLAAWVLLLLAACSQGPAPT. Substrate is bound by residues arginine 160, 167 to 168, asparagine 204, 213 to 215, 285 to 287, and glycine 318; these read WD, RSQ, and RQE. Residues aspartate 320 and glutamate 503 each act as proton donor/acceptor in the active site. Glutamate 518 is a binding site for substrate.

It belongs to the glycosyl hydrolase 37 family.

It is found in the periplasm. It catalyses the reaction alpha,alpha-trehalose + H2O = alpha-D-glucose + beta-D-glucose. Provides the cells with the ability to utilize trehalose at high osmolarity by splitting it into glucose molecules that can subsequently be taken up by the phosphotransferase-mediated uptake system. The chain is Periplasmic trehalase from Pseudomonas aeruginosa (strain ATCC 15692 / DSM 22644 / CIP 104116 / JCM 14847 / LMG 12228 / 1C / PRS 101 / PAO1).